A 114-amino-acid chain; its full sequence is Large ribosomal subunit protein bL19 (114 aa).

This sequence belongs to the bacterial ribosomal protein bL19 family.

Functionally, this protein is located at the 30S-50S ribosomal subunit interface and may play a role in the structure and function of the aminoacyl-tRNA binding site. This chain is Large ribosomal subunit protein bL19, found in Bacillus mycoides (strain KBAB4) (Bacillus weihenstephanensis).